Consider the following 276-residue polypeptide: Formamidopyrimidine-DNA glycosylase (276 aa).

P2 acts as the Schiff-base intermediate with DNA in catalysis. E3 (proton donor) is an active-site residue. Residue K58 is the Proton donor; for beta-elimination activity of the active site. H94, R112, and R157 together coordinate DNA. An FPG-type zinc finger spans residues 242–276 (FVYDRAGLPCRVCGTPIKQIVQGQRSTYFCPTCQR). Catalysis depends on R266, which acts as the Proton donor; for delta-elimination activity.

This sequence belongs to the FPG family. In terms of assembly, monomer. The cofactor is Zn(2+).

The enzyme catalyses Hydrolysis of DNA containing ring-opened 7-methylguanine residues, releasing 2,6-diamino-4-hydroxy-5-(N-methyl)formamidopyrimidine.. The catalysed reaction is 2'-deoxyribonucleotide-(2'-deoxyribose 5'-phosphate)-2'-deoxyribonucleotide-DNA = a 3'-end 2'-deoxyribonucleotide-(2,3-dehydro-2,3-deoxyribose 5'-phosphate)-DNA + a 5'-end 5'-phospho-2'-deoxyribonucleoside-DNA + H(+). Functionally, involved in base excision repair of DNA damaged by oxidation or by mutagenic agents. Acts as a DNA glycosylase that recognizes and removes damaged bases. Has a preference for oxidized purines, such as 7,8-dihydro-8-oxoguanine (8-oxoG). Has AP (apurinic/apyrimidinic) lyase activity and introduces nicks in the DNA strand. Cleaves the DNA backbone by beta-delta elimination to generate a single-strand break at the site of the removed base with both 3'- and 5'-phosphates. The protein is Formamidopyrimidine-DNA glycosylase of Paraburkholderia xenovorans (strain LB400).